An 88-amino-acid polypeptide reads, in one-letter code: Cell division topological specificity factor (88 aa).

The protein belongs to the MinE family.

Prevents the cell division inhibition by proteins MinC and MinD at internal division sites while permitting inhibition at polar sites. This ensures cell division at the proper site by restricting the formation of a division septum at the midpoint of the long axis of the cell. The sequence is that of Cell division topological specificity factor from Carboxydothermus hydrogenoformans (strain ATCC BAA-161 / DSM 6008 / Z-2901).